The following is a 392-amino-acid chain: UDP-N-acetylglucosamine--N-acetylmuramyl-(pentapeptide) pyrophosphoryl-undecaprenol N-acetylglucosamine transferase (392 aa).

UDP-N-acetyl-alpha-D-glucosamine is bound by residues 14–16 (TGG), Asn124, Arg167, Ser195, Ile251, and Gln296.

The protein belongs to the glycosyltransferase 28 family. MurG subfamily.

The protein localises to the cell inner membrane. The enzyme catalyses di-trans,octa-cis-undecaprenyl diphospho-N-acetyl-alpha-D-muramoyl-L-alanyl-D-glutamyl-meso-2,6-diaminopimeloyl-D-alanyl-D-alanine + UDP-N-acetyl-alpha-D-glucosamine = di-trans,octa-cis-undecaprenyl diphospho-[N-acetyl-alpha-D-glucosaminyl-(1-&gt;4)]-N-acetyl-alpha-D-muramoyl-L-alanyl-D-glutamyl-meso-2,6-diaminopimeloyl-D-alanyl-D-alanine + UDP + H(+). It participates in cell wall biogenesis; peptidoglycan biosynthesis. Functionally, cell wall formation. Catalyzes the transfer of a GlcNAc subunit on undecaprenyl-pyrophosphoryl-MurNAc-pentapeptide (lipid intermediate I) to form undecaprenyl-pyrophosphoryl-MurNAc-(pentapeptide)GlcNAc (lipid intermediate II). The protein is UDP-N-acetylglucosamine--N-acetylmuramyl-(pentapeptide) pyrophosphoryl-undecaprenol N-acetylglucosamine transferase of Sphingopyxis alaskensis (strain DSM 13593 / LMG 18877 / RB2256) (Sphingomonas alaskensis).